The sequence spans 282 residues: Ribosome-inactivating protein bryodin II (282 aa).

Positions 1–21 (MRSIGFYSVLALYVGAHVTED) are cleaved as a signal peptide. N-linked (GlcNAc...) asparagine glycosylation is present at asparagine 25. Residue glutamate 183 is part of the active site.

This sequence belongs to the ribosome-inactivating protein family. Type 1 RIP subfamily.

It carries out the reaction Endohydrolysis of the N-glycosidic bond at one specific adenosine on the 28S rRNA.. Ribosome-inactivating protein of type 1, inhibits protein synthesis in animal cells. This Bryonia dioica (Red bryony) protein is Ribosome-inactivating protein bryodin II.